Reading from the N-terminus, the 136-residue chain is Cytochrome b5 (136 aa).

Residues 5–81 (TKVFTLAEVS…LDEYYVGDID (77 aa)) enclose the Cytochrome b5 heme-binding domain. The heme site is built by His-40 and His-64. Residues 107-127 (FVVKLLQFLVPLIILGVAFGI) form a helical membrane-spanning segment.

Belongs to the cytochrome b5 family. As to expression, is highly expressed in developing seeds, moderately expressed in flowers, and is expressed at low levels in the leaf.

The protein localises to the endoplasmic reticulum membrane. It localises to the microsome membrane. Functionally, cytochrome b5 is a membrane bound hemoprotein which function as an electron carrier for several membrane bound oxygenases. May play a key role in the modification by desaturation of fatty acids in the endoplasmic reticulum, which in the developing seed is utilized for membrane synthesis and in the developmentally regulated production of large amounts of storage lipids. Is involved in the reduction of cytochrome P-450 and may therefore be involved in flavonoid biosynthesis in the petals. This chain is Cytochrome b5, found in Nicotiana tabacum (Common tobacco).